We begin with the raw amino-acid sequence, 464 residues long: Cysteine--tRNA ligase (464 aa).

C30 provides a ligand contact to Zn(2+). The short motif at 32-42 is the 'HIGH' region element; sequence MTVYDYCHIGH. Zn(2+)-binding residues include C214, H239, and E243. Residues 271 to 275 carry the 'KMSKS' region motif; the sequence is KMSKS. Residue K274 coordinates ATP.

The protein belongs to the class-I aminoacyl-tRNA synthetase family. In terms of assembly, monomer. Zn(2+) is required as a cofactor.

The protein resides in the cytoplasm. It carries out the reaction tRNA(Cys) + L-cysteine + ATP = L-cysteinyl-tRNA(Cys) + AMP + diphosphate. The protein is Cysteine--tRNA ligase of Janthinobacterium sp. (strain Marseille) (Minibacterium massiliensis).